Consider the following 152-residue polypeptide: Protein-export protein SecB (152 aa).

Belongs to the SecB family. As to quaternary structure, homotetramer, a dimer of dimers. One homotetramer interacts with 1 SecA dimer.

It is found in the cytoplasm. One of the proteins required for the normal export of preproteins out of the cell cytoplasm. It is a molecular chaperone that binds to a subset of precursor proteins, maintaining them in a translocation-competent state. It also specifically binds to its receptor SecA. This Rickettsia felis (strain ATCC VR-1525 / URRWXCal2) (Rickettsia azadi) protein is Protein-export protein SecB.